Reading from the N-terminus, the 1312-residue chain is Beta-N-acetylhexosaminidase (1312 aa).

The signal sequence occupies residues 1 to 33 (MKHEKQQRFSIRKYAVGAASVLIGFAFQAQTVA). Residues 38–59 (TPTTTENQPTIHTVSDSPQSSE) show a composition bias toward polar residues. Residues 38–178 (TPTTTENQPT…ATEAGKERAA (141 aa)) form a disordered region. Residues 118–177 (AEKETANKKAEEASPKKEEAKEVDSKESNTDKTDKDKPAKKDEAKAEADKPATEAGKERA) are compositionally biased toward basic and acidic residues. Catalytic domain regions lie at residues 176–616 (RAAT…TPEA) and 621–1046 (EAKR…PAVT). 2 G5 domains span residues 1059 to 1138 (NVET…GAPV) and 1150 to 1230 (TTEV…GTMV). The disordered stretch occupies residues 1244 to 1290 (EEKPKLEIPSQPAPSTAPAEESKVLPQDPAPVVTEKKLPETGTHDSA). Residues 1277–1286 (TEKKLPETGT) show a composition bias toward basic and acidic residues. The LPXTG sorting signal motif lies at 1281–1285 (LPETG). The residue at position 1284 (threonine 1284) is a Pentaglycyl murein peptidoglycan amidated threonine. The propeptide at 1285–1312 (GTHDSAGLVVAGLMSTLAAYGLTKRKED) is removed by sortase.

The protein belongs to the glycosyl hydrolase 20 family.

It localises to the secreted. The protein resides in the cell wall. It catalyses the reaction Hydrolysis of terminal non-reducing N-acetyl-D-hexosamine residues in N-acetyl-beta-D-hexosaminides.. In Streptococcus pneumoniae serotype 4 (strain ATCC BAA-334 / TIGR4), this protein is Beta-N-acetylhexosaminidase (strH).